The following is a 284-amino-acid chain: MLQNEVENFANLLEQATVYLAPYQEKIIVVKYGGNAMINEDLKKLVMQDILLLNQLGVKVVLVHGGGPEISQGVKLLGKEPQFINGLRVTDQDTINVVLQMLAGKVNKSLVALLKGKGVGLCGIDANMLQCEKLQAEVDYGFVGEIVKVNTQLLELALSANLIPVISTVGVDDQGVAYNINADTVASEIAMALGAAKLVSMTDIAGLLRDRFDESTLIPEVEVSEVQGLIDQGIIAGGMIPKIACCTDFINAGGIEANIIDGRVPHAILVSLFGGKNGTLFYKK.

Residues 66 to 67 (GG), Arg-88, and Asn-179 contribute to the substrate site.

This sequence belongs to the acetylglutamate kinase family. ArgB subfamily.

It is found in the cytoplasm. It carries out the reaction N-acetyl-L-glutamate + ATP = N-acetyl-L-glutamyl 5-phosphate + ADP. Its pathway is amino-acid biosynthesis; L-arginine biosynthesis; N(2)-acetyl-L-ornithine from L-glutamate: step 2/4. Catalyzes the ATP-dependent phosphorylation of N-acetyl-L-glutamate. The polypeptide is Acetylglutamate kinase (Actinobacillus pleuropneumoniae serotype 7 (strain AP76)).